The primary structure comprises 308 residues: tRNA pseudouridine synthase B (308 aa).

Asp44 serves as the catalytic Nucleophile.

It belongs to the pseudouridine synthase TruB family. Type 1 subfamily.

The enzyme catalyses uridine(55) in tRNA = pseudouridine(55) in tRNA. Its function is as follows. Responsible for synthesis of pseudouridine from uracil-55 in the psi GC loop of transfer RNAs. The protein is tRNA pseudouridine synthase B of Bdellovibrio bacteriovorus (strain ATCC 15356 / DSM 50701 / NCIMB 9529 / HD100).